Consider the following 286-residue polypeptide: Small ribosomal subunit protein uS2 (286 aa).

The interval lysine 257 to glycine 286 is disordered.

The protein belongs to the universal ribosomal protein uS2 family.

The sequence is that of Small ribosomal subunit protein uS2 from Ehrlichia ruminantium (strain Gardel).